The sequence spans 907 residues: MFGKLLTKIFGSRNDRTLKTLGKIVTKINALEADFEKFSDEELKAKTAEFKQRLESGQTLDDVMPEAFAVVREASKRVFEMRHFDVQLLGGMVLDSNRIAEMRTGEGKTLTATLPAYLNALTGKGVHVITVNDYLARRDAENNRPLFEFLGMTVGVNIAGMGQAEKKMAYASDITYGTNNEFGFDYLRDNMAFSPNERVQRPLHYALIDEVDSILIDEARTPLIISGAAEDSSELYIKINTLIPHLIRQDKEDTEEEIGDGDYSIDEKAKQVHMTERGQEKVEVLLTERGMLAEGDSLYSAANISLLHHVNAALRAHTLFEKDVDYIVQDNEVIIVDEHTGRTMPGRRWSEGLHQAVEAKEGVHIQNENQTLASITFQNFFRQYEKLAGMTGTADTEAFEFQHIYGLDTVVIPTNRPMVRKDHADLVYLTAEEKYDAIIKDIIDCRDRGQPVLVGTVSIEQSELLHSMLKKAKIPHEVLNAKFHEREAEIVAQAGRSGAVTIATNMAGRGTDIVLGGNWNMEIDALENPTAEQKAKIKADWQVRHDEVVAAGGLHILGTERHESRRIDNQLRGRSGRQGDAGSSRFYLSMEDSLMRIFASERVSSMMKKLGMEKGEAIEHPWVSRAIENAQRKVEARNFDIRKQLLEFDDVANDQRQVVYAQRNELMDAESIQDTIVNIQADVVNGLIDQYIPPQSVEELWDIAGLETRLEQEYALRMPVQEWLDKEDDLHEETLRERIVEIWVKAYKAKEEMVGAQVLRQFEKAVMLQTLDGLWKEHLAAMDHLRQGIHLRGYAQKNPKQEYKRESFELFQQMLESLKHDVISILSKVQVQAQSDVEEMEERRRQEEAKVRRDYQHAEAEALVGAEEAQALAATQPVVREGEKVGRNDPCPCGSGRKYKQCHGKLS.

ATP contacts are provided by residues glutamine 87, 105–109, and aspartate 512; that span reads GEGKT. Zn(2+) is bound by residues cysteine 891, cysteine 893, cysteine 902, and histidine 903.

It belongs to the SecA family. Monomer and homodimer. Part of the essential Sec protein translocation apparatus which comprises SecA, SecYEG and auxiliary proteins SecDF-YajC and YidC. Zn(2+) serves as cofactor.

Its subcellular location is the cell inner membrane. It is found in the cytoplasm. It carries out the reaction ATP + H2O + cellular proteinSide 1 = ADP + phosphate + cellular proteinSide 2.. Part of the Sec protein translocase complex. Interacts with the SecYEG preprotein conducting channel. Has a central role in coupling the hydrolysis of ATP to the transfer of proteins into and across the cell membrane, serving both as a receptor for the preprotein-SecB complex and as an ATP-driven molecular motor driving the stepwise translocation of polypeptide chains across the membrane. This chain is Protein translocase subunit SecA, found in Shewanella loihica (strain ATCC BAA-1088 / PV-4).